The following is a 111-amino-acid chain: Ribonuclease P protein component (111 aa).

It belongs to the RnpA family. As to quaternary structure, consists of a catalytic RNA component (M1 or rnpB) and a protein subunit.

The enzyme catalyses Endonucleolytic cleavage of RNA, removing 5'-extranucleotides from tRNA precursor.. Its function is as follows. RNaseP catalyzes the removal of the 5'-leader sequence from pre-tRNA to produce the mature 5'-terminus. It can also cleave other RNA substrates such as 4.5S RNA. The protein component plays an auxiliary but essential role in vivo by binding to the 5'-leader sequence and broadening the substrate specificity of the ribozyme. The sequence is that of Ribonuclease P protein component from Fusobacterium nucleatum subsp. nucleatum (strain ATCC 25586 / DSM 15643 / BCRC 10681 / CIP 101130 / JCM 8532 / KCTC 2640 / LMG 13131 / VPI 4355).